The primary structure comprises 186 residues: Single-stranded DNA-binding protein 1 (186 aa).

The 108-residue stretch at 1–108 folds into the SSB domain; it reads MDATVTVVGN…LEIDEIGPTL (108 aa). The interval 120–186 is disordered; it reads QAGHGVSPDP…EDFDSDEVPF (67 aa). Polar residues predominate over residues 132-141; sequence DSQTGQGIDS. The segment covering 175 to 186 has biased composition (acidic residues); sequence SYEDFDSDEVPF.

Homotetramer.

The protein is Single-stranded DNA-binding protein 1 (ssb1) of Tropheryma whipplei (strain TW08/27) (Whipple's bacillus).